The primary structure comprises 272 residues: Orotidine 5'-phosphate decarboxylase (272 aa).

Lysine 95 functions as the Proton donor in the catalytic mechanism.

The protein belongs to the OMP decarboxylase family. Type 2 subfamily.

The catalysed reaction is orotidine 5'-phosphate + H(+) = UMP + CO2. Its pathway is pyrimidine metabolism; UMP biosynthesis via de novo pathway; UMP from orotate: step 2/2. The sequence is that of Orotidine 5'-phosphate decarboxylase from Cupriavidus metallidurans (strain ATCC 43123 / DSM 2839 / NBRC 102507 / CH34) (Ralstonia metallidurans).